A 170-amino-acid chain; its full sequence is Protein SprT (170 aa).

Residues 22-165 (LQLANQHLGT…RQCGEKLQFI (144 aa)) enclose the SprT-like domain. His-78 contributes to the Zn(2+) binding site. Residue Glu-79 is part of the active site. His-82 lines the Zn(2+) pocket.

Belongs to the SprT family. It depends on Zn(2+) as a cofactor.

It localises to the cytoplasm. The protein is Protein SprT of Yersinia pseudotuberculosis serotype O:1b (strain IP 31758).